A 309-amino-acid chain; its full sequence is uncharacterized protein (309 aa).

Positions 1–11 (MPGNSRRRGAV) are enriched in basic residues. The tract at residues 1 to 69 (MPGNSRRRGA…PVKRTDETET (69 aa)) is disordered. Positions 261, 281, and 290 each coordinate S-adenosyl-L-methionine.

Belongs to the class IV-like SAM-binding methyltransferase superfamily. RNA methyltransferase TrmH family.

This is an uncharacterized protein from Mycobacterium leprae (strain TN).